The following is a 141-amino-acid chain: HTH-type transcriptional repressor NsrR (141 aa).

The HTH rrf2-type domain occupies 2-129 (QLTSFTDYGL…DNYTLADLVE (128 aa)). The H-T-H motif DNA-binding region spans 28-51 (ISEVTEVYGVSRNHMVKIINQLSR). 3 residues coordinate [2Fe-2S] cluster: Cys91, Cys96, and Cys102.

[2Fe-2S] cluster is required as a cofactor.

In terms of biological role, nitric oxide-sensitive repressor of genes involved in protecting the cell against nitrosative stress. May require iron for activity. This is HTH-type transcriptional repressor NsrR from Klebsiella pneumoniae subsp. pneumoniae (strain ATCC 700721 / MGH 78578).